Here is a 201-residue protein sequence, read N- to C-terminus: L(+)-tartrate dehydratase subunit beta (201 aa).

Histidine 37 is an active-site residue.

The protein belongs to the class-I fumarase family. In terms of assembly, heterotetramer of two alpha and two beta subunits.

It catalyses the reaction (2R,3R)-tartrate = oxaloacetate + H2O. The sequence is that of L(+)-tartrate dehydratase subunit beta (ttdB) from Escherichia coli O6:K15:H31 (strain 536 / UPEC).